The sequence spans 466 residues: Light-independent protochlorophyllide reductase subunit N (466 aa).

Cys-24, Cys-49, and Cys-109 together coordinate [4Fe-4S] cluster.

Belongs to the BchN/ChlN family. Protochlorophyllide reductase is composed of three subunits; ChlL, ChlN and ChlB. Forms a heterotetramer of two ChlB and two ChlN subunits. [4Fe-4S] cluster is required as a cofactor.

It carries out the reaction chlorophyllide a + oxidized 2[4Fe-4S]-[ferredoxin] + 2 ADP + 2 phosphate = protochlorophyllide a + reduced 2[4Fe-4S]-[ferredoxin] + 2 ATP + 2 H2O. It functions in the pathway porphyrin-containing compound metabolism; chlorophyll biosynthesis (light-independent). Its function is as follows. Component of the dark-operative protochlorophyllide reductase (DPOR) that uses Mg-ATP and reduced ferredoxin to reduce ring D of protochlorophyllide (Pchlide) to form chlorophyllide a (Chlide). This reaction is light-independent. The NB-protein (ChlN-ChlB) is the catalytic component of the complex. This is Light-independent protochlorophyllide reductase subunit N from Synechococcus sp. (strain JA-3-3Ab) (Cyanobacteria bacterium Yellowstone A-Prime).